Reading from the N-terminus, the 254-residue chain is Alcohol dehydrogenase 1 (254 aa).

10–33 serves as a coordination point for NAD(+); that stretch reads FVAGLGGIGLDTSREIVKSGPKNL. A substrate-binding site is contributed by Ser138. The Proton acceptor role is filled by Tyr151.

Belongs to the short-chain dehydrogenases/reductases (SDR) family. As to quaternary structure, homodimer.

It carries out the reaction a primary alcohol + NAD(+) = an aldehyde + NADH + H(+). The enzyme catalyses a secondary alcohol + NAD(+) = a ketone + NADH + H(+). In Drosophila montana (Fruit fly), this protein is Alcohol dehydrogenase 1 (Adh1).